The chain runs to 361 residues: Queuine tRNA-ribosyltransferase (361 aa).

The active-site Proton acceptor is aspartate 92. Substrate contacts are provided by residues 92–96 (DSGGF), aspartate 146, glutamine 189, and glycine 216. The interval 247 to 253 (GVGKPAD) is RNA binding. Residue aspartate 266 is the Nucleophile of the active site. Positions 271 to 275 (TRSGR) are RNA binding; important for wobble base 34 recognition. Cysteine 304, cysteine 306, cysteine 309, and histidine 335 together coordinate Zn(2+).

It belongs to the queuine tRNA-ribosyltransferase family. As to quaternary structure, homodimer. Within each dimer, one monomer is responsible for RNA recognition and catalysis, while the other monomer binds to the replacement base PreQ1. The cofactor is Zn(2+).

It catalyses the reaction 7-aminomethyl-7-carbaguanine + guanosine(34) in tRNA = 7-aminomethyl-7-carbaguanosine(34) in tRNA + guanine. The protein operates within tRNA modification; tRNA-queuosine biosynthesis. Functionally, catalyzes the base-exchange of a guanine (G) residue with the queuine precursor 7-aminomethyl-7-deazaguanine (PreQ1) at position 34 (anticodon wobble position) in tRNAs with GU(N) anticodons (tRNA-Asp, -Asn, -His and -Tyr). Catalysis occurs through a double-displacement mechanism. The nucleophile active site attacks the C1' of nucleotide 34 to detach the guanine base from the RNA, forming a covalent enzyme-RNA intermediate. The proton acceptor active site deprotonates the incoming PreQ1, allowing a nucleophilic attack on the C1' of the ribose to form the product. After dissociation, two additional enzymatic reactions on the tRNA convert PreQ1 to queuine (Q), resulting in the hypermodified nucleoside queuosine (7-(((4,5-cis-dihydroxy-2-cyclopenten-1-yl)amino)methyl)-7-deazaguanosine). The polypeptide is Queuine tRNA-ribosyltransferase (Rickettsia peacockii (strain Rustic)).